The following is a 983-amino-acid chain: MRLGSGTFATCCVAIEVLGIAVFLRGFFPAPVRSSARAEHGAEPPAPEPSAGASSNWTTLPPPLFSKVVIVLIDALRDDFVFGSKGVKFMPYTTYLVEKGASHSFVAEAKPPTVTMPRIKALMTGSLPGFVDVIRNLNSPALLEDSVIRQAKAAGKRIVFYGDETWVKLFPKHFVEYDGTTSFFVSDYTEVDNNVTRHLDKVLKRGDWDILILHYLGLDHIGHISGPNSPLIGQKLSEMDSVLMKIHTSLQSKERETPLPNLLVLCGDHGMSETGSHGASSTEEVNTPLILISSAFERKPGDIRHPKHVQQTDVAATLAIALGLPIPKDSVGSLLFPVVEGRPMREQLRFLHLNTVQLSKLLQENVPSYEKDPGFEQFKMSERLHGNWIRLYLEEKHSEVLFNLGSKVLRQYLDALKTLSLSLSAQVAQYDIYSMMVGTVVVLEVLTLLLLSVPQALRRKAELEVPLSSPGFSLLFYLVILVLSAVHVIVCTSAESSCYFCGLSWLAAGGVMVLASALLCVIVSVLTNVLVGGNTPRKNPMHPSSRWSELDLLILLGTAGHVLSLGASSFVEEEHQTWYFLVNTLCLALSQETYRNYFLGDDGEPPCGLCVEQGHDGATAAWQDGPGCDVLERDKGHGSPSTSEVLRGREKWMVLASPWLILACCRLLRSLNQTGVQWAHRPDLGHWLTSSDHKAELSVLAALSLLVVFVLVQRGCSPVSKAALALGLLGVYCYRAAIGSVRFPWRPDSKDISKGIIEARFVYVFVLGILFTGTKDLLKSQVIAADFKLKTVGLWEIYSGLVLLAALLFRPHNLPVLAFSLLIQTLMTKFIWKPLRHDAAEITVMHYWFGQAFFYFQGNSNNIATVDISAGFVGLDTYVEIPAVLLTAFGTYAGPVLWASHLVHFLSSETRSGSALSHACFCYALICSIPVFTYIVLVTSLRYHLFIWSVFSPKLLYEGMHLLITAAVCVFFTAMDQTRLTQS.

Over 1–431 the chain is Lumenal; sequence MRLGSGTFAT…SLSAQVAQYD (431 aa). N-linked (GlcNAc...) asparagine glycosylation is present at Asn194. 12 helical membrane-spanning segments follow: residues 432 to 452, 471 to 491, 506 to 526, 552 to 572, 699 to 719, 721 to 741, 752 to 772, 789 to 809, 812 to 832, 879 to 899, 919 to 939, and 955 to 975; these read IYSMMVGTVVVLEVLTLLLLS, GFSLLFYLVILVLSAVHVIVC, LAAGGVMVLASALLCVIVSVL, LLILLGTAGHVLSLGASSFVE, VLAALSLLVVFVLVQRGCSPV, KAALALGLLGVYCYRAAIGSV, ISKGIIEARFVYVFVLGILFT, LKTVGLWEIYSGLVLLAALLF, HNLPVLAFSLLIQTLMTKFIW, VEIPAVLLTAFGTYAGPVLWA, ACFCYALICSIPVFTYIVLVT, and LLYEGMHLLITAAVCVFFTAM.

This sequence belongs to the PIGG/PIGN/PIGO family. PIGG subfamily. In terms of assembly, part of the ethanolamine phosphate transferase 2 complex composed by PIGG and PIGF. PIGF is required to stabilize it. Competes with PIGO for the binding of PIGF.

The protein resides in the endoplasmic reticulum membrane. Its pathway is glycolipid biosynthesis; glycosylphosphatidylinositol-anchor biosynthesis. Its function is as follows. Catalytic subunit of the ethanolamine phosphate transferase 2 complex that transfers an ethanolamine phosphate (EtNP) from a phosphatidylethanolamine (PE) to the 6-OH position of the second alpha-1,6-linked mannose of a 6-PEtn-alpha-D-Man-(1-&gt;2)-alpha-D-Man-(1-&gt;6)-2-PEtn-alpha-D-Man-(1-&gt;4)-alpha-D-GlcN-(1-&gt;6)-(1-radyl,2-acyl-sn-glycero-3-phospho)-2-acyl-inositol (also termed H7) intermediate to generate a 6-PEtn-alpha-D-Man-(1-&gt;2)-6-PEtn-alpha-D-Man-(1-&gt;6)-2-PEtn-alpha-D-Man-(1-&gt;4)-alpha-D-GlcN-(1-&gt;6)-(1-radyl,2-acyl-sn-glycero-3-phospho)-2-acyl-inositol (also termed H8) and participates in the eleventh step of the glycosylphosphatidylinositol-anchor biosynthesis. This Homo sapiens (Human) protein is GPI ethanolamine phosphate transferase 2, catalytic subunit.